Consider the following 173-residue polypeptide: Aliphatic sulfonate oxidoreductase, polyferredoxin-like subunit (173 aa).

4Fe-4S ferredoxin-type domains lie at 9 to 40 (IWIL…WPEA), 48 to 80 (LFPG…VDEK), and 82 to 111 (GAVV…IPAG). [4Fe-4S] cluster contacts are provided by cysteine 18, cysteine 21, cysteine 24, cysteine 28, cysteine 58, cysteine 61, cysteine 66, cysteine 70, cysteine 91, cysteine 94, cysteine 97, cysteine 101, cysteine 118, cysteine 121, cysteine 127, and cysteine 131.

In terms of assembly, heterodimer composed of a small WOR5-S subunit, with four [4Fe-4S] clusters, and a large WOR5-L subunit, containing the active site tungsto-bispyranopterin cofactor as well as another [4Fe-4S] cluster. [4Fe-4S] cluster is required as a cofactor.

Its subcellular location is the cytoplasm. Polyferredoxin-like subunit of an oxidoreductase that can desulfonate and oxidize aliphatic sulfonates such as taurine. May serve as a an electron-transfer subunit between the catalytic subunit and ferredoxin. In Pyrococcus furiosus (strain ATCC 43587 / DSM 3638 / JCM 8422 / Vc1), this protein is Aliphatic sulfonate oxidoreductase, polyferredoxin-like subunit.